Reading from the N-terminus, the 321-residue chain is Sideroflexin-3 (321 aa).

M1 is modified (N-acetylmethionine). Transmembrane regions (helical) follow at residues 146–164 (LGTAYVSATTGAVATALGL), 174–194 (LVGRFVPFAAVAAANCINIPL), 225–245 (IFQVVISRIGMAIPAMAIPPV), and 266–286 (LQVGLVGFCLVFATPLCCALF).

This sequence belongs to the sideroflexin family. As to expression, widely expressed.

The protein resides in the mitochondrion membrane. It catalyses the reaction L-serine(in) = L-serine(out). Functionally, mitochondrial serine transporter that mediates transport of serine into mitochondria, an important step of the one-carbon metabolism pathway. Mitochondrial serine is converted to glycine and formate, which then exits to the cytosol where it is used to generate the charged folates that serve as one-carbon donors. In Mus musculus (Mouse), this protein is Sideroflexin-3.